The primary structure comprises 609 residues: mRNA cap guanine-N(7) methyltransferase (609 aa).

Residues 1–10 (MASKEEERTG) show a composition bias toward basic and acidic residues. Residues 1–252 (MASKEEERTG…EEDAMRNSQS (252 aa)) form a disordered region. 2 stretches are compositionally biased toward low complexity: residues 28 to 47 (QPVVPAEPASASASIEATPT) and 70 to 87 (PQTTTIEPSQQPEQQQKQ). Basic and acidic residues predominate over residues 148–163 (ANDRPISKRKRLEERH). Residues 193 to 205 (PRSPSPPLPPRSP) are compositionally biased toward pro residues. A compositionally biased stretch (basic and acidic residues) spans 233–247 (RRQEERERALEEDAM). The 313-residue stretch at 278-590 (SKIKGLRSFN…KYTPLGFTSA (313 aa)) folds into the mRNA cap 0 methyltransferase domain. 287–288 (NN) provides a ligand contact to mRNA. Residues K291, G314, D338, D379, 422 to 424 (MFA), and Y427 contribute to the S-adenosyl-L-methionine site.

This sequence belongs to the class I-like SAM-binding methyltransferase superfamily. mRNA cap 0 methyltransferase family.

The protein localises to the nucleus. The enzyme catalyses a 5'-end (5'-triphosphoguanosine)-ribonucleoside in mRNA + S-adenosyl-L-methionine = a 5'-end (N(7)-methyl 5'-triphosphoguanosine)-ribonucleoside in mRNA + S-adenosyl-L-homocysteine. Its function is as follows. Responsible for methylating the 5'-cap structure of mRNAs. In Aspergillus niger (strain ATCC MYA-4892 / CBS 513.88 / FGSC A1513), this protein is mRNA cap guanine-N(7) methyltransferase (abd1).